The primary structure comprises 206 residues: Ribosomal RNA large subunit methyltransferase E (206 aa).

Residues glycine 60, tryptophan 62, aspartate 80, aspartate 96, and aspartate 121 each contribute to the S-adenosyl-L-methionine site. Lysine 161 (proton acceptor) is an active-site residue.

It belongs to the class I-like SAM-binding methyltransferase superfamily. RNA methyltransferase RlmE family.

It localises to the cytoplasm. The enzyme catalyses uridine(2552) in 23S rRNA + S-adenosyl-L-methionine = 2'-O-methyluridine(2552) in 23S rRNA + S-adenosyl-L-homocysteine + H(+). Functionally, specifically methylates the uridine in position 2552 of 23S rRNA at the 2'-O position of the ribose in the fully assembled 50S ribosomal subunit. The polypeptide is Ribosomal RNA large subunit methyltransferase E (Francisella tularensis subsp. novicida (strain U112)).